A 343-amino-acid polypeptide reads, in one-letter code: Annexin A1 isoform p37 (343 aa).

Gln19 participates in a covalent cross-link: Isoglutamyl lysine isopeptide (Gln-Lys) (interchain with K-?). Tyr21 is subject to Phosphotyrosine; by EGFR; in vitro. Position 24 is a phosphoserine; by PKC; in vitro (Ser24). 4 Annexin repeats span residues 38–109 (FDPS…ALLK), 110–181 (TPAQ…VLAK), 193–265 (DLAD…ALVK), and 269–340 (SKPA…ALCG).

Belongs to the annexin family. Phosphorylated by protein kinase C and epidermal growth factor receptor/kinase. Post-translationally, the N-terminus is blocked.

It is found in the nucleus. It localises to the cytoplasm. Its subcellular location is the cell projection. The protein localises to the cilium. The protein resides in the basolateral cell membrane. Functionally, calcium/phospholipid-binding protein which promotes membrane fusion and is involved in exocytosis. This protein regulates phospholipase A2 activity. It seems to bind from two to four calcium ions with high affinity. This chain is Annexin A1 isoform p37 (CP37), found in Columba livia (Rock dove).